The chain runs to 417 residues: MVSSQPVPIDDGGKRRKKKRRTRAMESFTGKFADLYRLTDELLGEGAYAKVQGCVSLQNGKDYAVKIVEKKAGHSRSRVFREVETLYQCQGNKNILELIEFCEDDARFYLVFEKLRGGSILSHIQKRKHFNEREASKVVKDIASALDFLHTKGIAHRDLKPENILCEFKDKVSPVKICDFDLGSGVKLNSACTPITTPELTTPCGSAEYMAPEVVEVFTEEATFYDKRCDLWSLGVILYIMLSGYPPFVGNCGADCGWDRGEMCRVCQNKLFESIQEGKYEFPEKDWSHISNSAKDLISKLLVRDAKERLSAAQVLQHPWLQGDAPERGLPTPLVLQRNSSTKDLTIFAAEAVALNRQLSQHDSDLNEEHESFIHTVCSMRLSPPSKSRLAKRRAQAHARKGGSHLTHTTVTSQGAT.

The tract at residues 1–20 (MVSSQPVPIDDGGKRRKKKR) is disordered. In terms of domain architecture, Protein kinase spans 37-321 (RLTDELLGEG…AAQVLQHPWL (285 aa)). ATP-binding positions include 43–51 (LGEGAYAKV) and lysine 66. Aspartate 158 (proton acceptor) is an active-site residue. The interval 397 to 417 (AHARKGGSHLTHTTVTSQGAT) is disordered. A compositionally biased stretch (polar residues) spans 406-417 (LTHTTVTSQGAT).

Belongs to the protein kinase superfamily. CAMK Ser/Thr protein kinase family. Requires Mg(2+) as cofactor.

It carries out the reaction L-seryl-[protein] + ATP = O-phospho-L-seryl-[protein] + ADP + H(+). It catalyses the reaction L-threonyl-[protein] + ATP = O-phospho-L-threonyl-[protein] + ADP + H(+). In terms of biological role, may play a role in the response to environmental stress and cytokines. Appears to regulate translation by phosphorylating EIF4E, thus increasing the affinity of this protein for the 7-methylguanosine-containing mRNA cap. In Xenopus tropicalis (Western clawed frog), this protein is MAP kinase-interacting serine/threonine-protein kinase 1 (mknk1).